The primary structure comprises 196 residues: Molybdenum cofactor guanylyltransferase (196 aa).

GTP contacts are provided by residues 10–12 (LAG), Lys23, Asn51, Asp69, and Asp99. Position 99 (Asp99) interacts with Mg(2+).

Belongs to the MobA family. In terms of assembly, monomer. Requires Mg(2+) as cofactor.

The protein localises to the cytoplasm. The enzyme catalyses Mo-molybdopterin + GTP + H(+) = Mo-molybdopterin guanine dinucleotide + diphosphate. In terms of biological role, transfers a GMP moiety from GTP to Mo-molybdopterin (Mo-MPT) cofactor (Moco or molybdenum cofactor) to form Mo-molybdopterin guanine dinucleotide (Mo-MGD) cofactor. This chain is Molybdenum cofactor guanylyltransferase, found in Shewanella frigidimarina (strain NCIMB 400).